The following is a 167-amino-acid chain: Crossover junction endodeoxyribonuclease RuvC (167 aa).

Residues aspartate 7, glutamate 67, and aspartate 140 contribute to the active site. Positions 7, 67, and 140 each coordinate Mg(2+).

It belongs to the RuvC family. As to quaternary structure, homodimer which binds Holliday junction (HJ) DNA. The HJ becomes 2-fold symmetrical on binding to RuvC with unstacked arms; it has a different conformation from HJ DNA in complex with RuvA. In the full resolvosome a probable DNA-RuvA(4)-RuvB(12)-RuvC(2) complex forms which resolves the HJ. Mg(2+) is required as a cofactor.

The protein resides in the cytoplasm. It carries out the reaction Endonucleolytic cleavage at a junction such as a reciprocal single-stranded crossover between two homologous DNA duplexes (Holliday junction).. In terms of biological role, the RuvA-RuvB-RuvC complex processes Holliday junction (HJ) DNA during genetic recombination and DNA repair. Endonuclease that resolves HJ intermediates. Cleaves cruciform DNA by making single-stranded nicks across the HJ at symmetrical positions within the homologous arms, yielding a 5'-phosphate and a 3'-hydroxyl group; requires a central core of homology in the junction. The consensus cleavage sequence is 5'-(A/T)TT(C/G)-3'. Cleavage occurs on the 3'-side of the TT dinucleotide at the point of strand exchange. HJ branch migration catalyzed by RuvA-RuvB allows RuvC to scan DNA until it finds its consensus sequence, where it cleaves and resolves the cruciform DNA. This Moorella thermoacetica (strain ATCC 39073 / JCM 9320) protein is Crossover junction endodeoxyribonuclease RuvC.